The primary structure comprises 469 residues: Aspartyl/glutamyl-tRNA(Asn/Gln) amidotransferase subunit B (469 aa).

The protein belongs to the GatB/GatE family. GatB subfamily. As to quaternary structure, heterotrimer of A, B and C subunits.

It catalyses the reaction L-glutamyl-tRNA(Gln) + L-glutamine + ATP + H2O = L-glutaminyl-tRNA(Gln) + L-glutamate + ADP + phosphate + H(+). It carries out the reaction L-aspartyl-tRNA(Asn) + L-glutamine + ATP + H2O = L-asparaginyl-tRNA(Asn) + L-glutamate + ADP + phosphate + 2 H(+). In terms of biological role, allows the formation of correctly charged Asn-tRNA(Asn) or Gln-tRNA(Gln) through the transamidation of misacylated Asp-tRNA(Asn) or Glu-tRNA(Gln) in organisms which lack either or both of asparaginyl-tRNA or glutaminyl-tRNA synthetases. The reaction takes place in the presence of glutamine and ATP through an activated phospho-Asp-tRNA(Asn) or phospho-Glu-tRNA(Gln). In Methanococcus aeolicus (strain ATCC BAA-1280 / DSM 17508 / OCM 812 / Nankai-3), this protein is Aspartyl/glutamyl-tRNA(Asn/Gln) amidotransferase subunit B.